The following is a 137-amino-acid chain: Nucleoside diphosphate kinase (137 aa).

Positions 9, 57, 85, 91, 102, and 112 each coordinate ATP. His-115 serves as the catalytic Pros-phosphohistidine intermediate.

It belongs to the NDK family. As to quaternary structure, homotetramer. The cofactor is Mg(2+).

It is found in the cytoplasm. The catalysed reaction is a 2'-deoxyribonucleoside 5'-diphosphate + ATP = a 2'-deoxyribonucleoside 5'-triphosphate + ADP. It carries out the reaction a ribonucleoside 5'-diphosphate + ATP = a ribonucleoside 5'-triphosphate + ADP. In terms of biological role, major role in the synthesis of nucleoside triphosphates other than ATP. The ATP gamma phosphate is transferred to the NDP beta phosphate via a ping-pong mechanism, using a phosphorylated active-site intermediate. The polypeptide is Nucleoside diphosphate kinase (Helicobacter hepaticus (strain ATCC 51449 / 3B1)).